We begin with the raw amino-acid sequence, 491 residues long: Anhydromuropeptide permease (491 aa).

Topologically, residues 1 to 11 (MSSQYLRIFQQ) are cytoplasmic. Residues 12–32 (PRSAILLILGFASGLPLALTS) traverse the membrane as a helical segment. Residues 33–47 (GTLQAWMTVENIDLK) lie on the Periplasmic side of the membrane. The chain crosses the membrane as a helical span at residues 48-61 (TIGFFSLVGQAYVF). Residues 62–81 (KFLWSPLMDRYTPPFFGRRR) lie on the Cytoplasmic side of the membrane. The helical transmembrane segment at 82 to 105 (GWLLATQILLLVAIAAMGFLEPGT) threads the bilayer. A topological domain (periplasmic) is located at residue Gln106. A helical membrane pass occupies residues 107–124 (LRWMAALAVVIAFCSASQ). Topologically, residues 125 to 221 (DIVFDAWKTD…VAPLRDFFGR (97 aa)) are cytoplasmic. A helical transmembrane segment spans residues 222 to 240 (NNAWLILLLIVLYKLGDAF). Topologically, residues 241 to 264 (AMSLTTTFLIRGVGFDAGEVGVVN) are periplasmic. The chain crosses the membrane as a helical span at residues 265–284 (KTLGLLATIVGALYGGILMQ). Topologically, residues 285–287 (RLS) are cytoplasmic. Residues 288–303 (LFRALLIFGILQGASN) form a helical membrane-spanning segment. Residues 304–327 (AGYWLLSITDKHLYSMGAAVFFEN) lie on the Periplasmic side of the membrane. Residues 328 to 346 (LCGGMGTSAFVALLMTLCN) traverse the membrane as a helical segment. At 347–421 (KSFSATQFAL…NDNFISRTAY (75 aa)) the chain is on the cytoplasmic side. The helical transmembrane segment at 422–453 (PAGYAFAMWTLAAGVSLLAVWLLLLTMDALDL) threads the bilayer. At 454 to 457 (THFS) the chain is on the periplasmic side. A helical transmembrane segment spans residues 458–485 (FLPALLEVGVLVALSGVVLGGLLDYLAL). Topologically, residues 486–491 (RKTHLT) are cytoplasmic.

It belongs to the major facilitator superfamily.

Its subcellular location is the cell inner membrane. Functionally, permease involved in cell wall peptidoglycan recycling. Transports, from the periplasm into the cytoplasm, the disaccharide N-acetylglucosaminyl-beta-1,4-anhydro-N-acetylmuramic acid (GlcNAc-anhMurNAc) and GlcNAc-anhMurNAc-peptides. Transport is dependent on the proton motive force. This Escherichia coli O157:H7 protein is Anhydromuropeptide permease (ampG).